A 175-amino-acid polypeptide reads, in one-letter code: Adenylate kinase isoenzyme 6 homolog (175 aa).

Residues G17, G19, K20, T21, and S22 each coordinate ATP. Positions 37–60 (DISSAVKEKELHDGWDSEFQCYIL) are NMPbind. Residues 112–122 (KRNYNQHKITN) form an LID region. Position 113 (R113) interacts with ATP.

It belongs to the adenylate kinase family. AK6 subfamily. In terms of assembly, monomer and homodimer. Interacts with small ribosomal subunit protein uS11. Not a structural component of 43S pre-ribosomes, but transiently interacts with them by binding to uS11.

It is found in the cytoplasm. Its subcellular location is the nucleus. The catalysed reaction is AMP + ATP = 2 ADP. The enzyme catalyses ATP + H2O = ADP + phosphate + H(+). Broad-specificity nucleoside monophosphate (NMP) kinase that catalyzes the reversible transfer of the terminal phosphate group between nucleoside triphosphates and monophosphates. Also has ATPase activity. Involved in the late cytoplasmic maturation steps of the 40S ribosomal particles, specifically 18S rRNA maturation. While NMP activity is not required for ribosome maturation, ATPase activity is. Associates transiently with small ribosomal subunit protein uS11. ATP hydrolysis breaks the interaction with uS11. May temporarily remove uS11 from the ribosome to enable a conformational change of the ribosomal RNA that is needed for the final maturation step of the small ribosomal subunit. Its NMP activity may have a role in nuclear energy homeostasis. This is Adenylate kinase isoenzyme 6 homolog from Dictyostelium discoideum (Social amoeba).